The primary structure comprises 1320 residues: Immunoglobulin superfamily member 1 (1320 aa).

The signal sequence occupies residues 1–18; that stretch reads MMLRTFTLLLLCIWLNRG. Residues 19-504 are Extracellular-facing; sequence MTSMAAVESQ…LPWNSILNEA (486 aa). Ig-like C2-type domains lie at 29–113, 115–212, 224–308, 312–399, and 401–482; these read PELW…KILE, EAPG…KLVV, HPGP…IWVT, PKTW…ATYN, and VELI…HRSE. The N-linked (GlcNAc...) asparagine glycan is linked to asparagine 44. Cysteine 49 and cysteine 97 are disulfide-bonded. N-linked (GlcNAc...) asparagine glycosylation is found at asparagine 329, asparagine 365, and asparagine 372. Disulfide bonds link cysteine 334-cysteine 383 and cysteine 423-cysteine 466. A helical transmembrane segment spans residues 505 to 525; that stretch reads IRVSLTVQFLSLLLLVLWLQW. Over 526–534 the chain is Cytoplasmic; it reads KCRRLRLRE. Residues 535 to 555 traverse the membrane as a helical segment; the sequence is AWLLGTAQGVAMLVILIALLC. The Extracellular segment spans residues 556–1320; sequence CGLCNGALTE…GVSVEQTVPI (765 aa). 7 consecutive Ig-like C2-type domains span residues 572-665, 662-756, 761-853, 857-942, 949-1044, 1049-1134, and 1145-1226; these read PTPK…VGTD, VGTD…ELVI, PKPF…LIVT, PKPT…YLST, TDTF…ELIV, PKPS…NHSN, and PKPS…EPSD. 9 N-linked (GlcNAc...) asparagine glycosylation sites follow: asparagine 591, asparagine 731, asparagine 782, asparagine 830, asparagine 874, asparagine 923, asparagine 970, asparagine 1011, and asparagine 1066. Residues cysteine 783 and cysteine 833 are joined by a disulfide bond. Cysteine 879 and cysteine 926 are oxidised to a cystine. Cysteine 1071 and cysteine 1118 are oxidised to a cystine. Asparagine 1131 and asparagine 1207 each carry an N-linked (GlcNAc...) asparagine glycan. Cysteines 1167 and 1210 form a disulfide.

Interacts with INHA; the interaction is not confirmed by standard receptor binding assays. Interacts with ACVR1B; the interaction appears to be ligand-dependent as it is diminished by inhibin B and activin A. Interacts with ACVR2A, ACVR2B, ACVRL1 and BMPR1B. Interacts with HECTD1. Expressed in pituitary gland, testis and liver. Isoform 2 is expressed pituitary gland and testis.

The protein localises to the membrane. It is found in the secreted. Its function is as follows. Seems to be a coreceptor in inhibin signaling, but seems not to be a high-affinity inhibin receptor. Antagonizes activin A signaling in the presence or absence of inhibin B. Necessary to mediate a specific antagonistic effect of inhibin B on activin-stimulated transcription. This chain is Immunoglobulin superfamily member 1 (Igsf1), found in Rattus norvegicus (Rat).